The following is a 110-amino-acid chain: Ribonuclease P protein component 4 (110 aa).

Positions 65, 68, 94, and 97 each coordinate Zn(2+).

It belongs to the eukaryotic/archaeal RNase P protein component 4 family. As to quaternary structure, consists of a catalytic RNA component and at least 5 protein subunits. Requires Zn(2+) as cofactor.

The protein localises to the cytoplasm. The enzyme catalyses Endonucleolytic cleavage of RNA, removing 5'-extranucleotides from tRNA precursor.. Part of ribonuclease P, a protein complex that generates mature tRNA molecules by cleaving their 5'-ends. This Methanococcus maripaludis (strain DSM 14266 / JCM 13030 / NBRC 101832 / S2 / LL) protein is Ribonuclease P protein component 4.